Reading from the N-terminus, the 666-residue chain is Spartin (666 aa).

At Met-1 the chain carries N-acetylmethionine. The region spanning 16 to 94 (IREAYKKAFL…LQNVRTRLEI (79 aa)) is the MIT domain. The segment at 124–156 (EKLPEPQSFSSAPQHAEVNGNTSTPSAGAVAAP) is disordered. Residues 146–156 (STPSAGAVAAP) show a composition bias toward low complexity. Residues 190 to 380 (DSGEFSSVGE…QLDQGNKDVR (191 aa)) form a ubiquitin-binding region (UBR) domain region. The LC3-interacting region (LIR); mediates interaction with MAP1LC3A AND MAP1LC3C motif lies at 193-200 (EFSSVGEE). A disordered region spans residues 344-398 (EENEFQIPGRTRPSSDQLKEASGTDVKQLDQGNKDVRHKGKRGKRAKDTSSEEVN). A Glycyl lysine isopeptide (Lys-Gly) (interchain with G-Cter in ubiquitin) cross-link involves residue Lys-362. Over residues 379–388 (VRHKGKRGKR) the composition is skewed to basic residues. Positions 427–611 (ILSGASWVSW…YNINNIGIKA (185 aa)) constitute a Senescence domain. The interval 431 to 503 (ASWVSWGLVK…LVDGVCTVAN (73 aa)) is required for localization to lipid droplets. Residue Ser-470 is modified to Phosphoserine. A disordered region spans residues 636 to 666 (RENQEGAANVNVRGEKDEQTKEVKEAKKKDK). A compositionally biased stretch (basic and acidic residues) spans 648 to 666 (RGEKDEQTKEVKEAKKKDK).

As to quaternary structure, interacts with ITCH and WWP1. Interacts (via MIT domain) with IST1; leading to the recruitment of SPART to midbodies. Interacts with MAP1LC3A and MAP1LC3C. Ubiquitinated; ubiquitination does not require ITCH and WWP1. Ubiquitously expressed, with highest levels of expression detected in adipose tissue.

The protein localises to the cytoplasm. Its subcellular location is the midbody. It localises to the lipid droplet. Lipophagy receptor that plays an important role in lipid droplet (LD) turnover in motor neurons. Localizes to LDs and interacts with components of the autophagy machinery, such as MAP1LC3A/C proteins to deliver LDs to autophagosomes for degradation via lipophagy. Lipid transfer protein required for lipid droplet degradation, including by lipophagy. Can bind and transfer all lipid species found in lipid droplets, from phospholipids to triglycerides and sterol esters but the direction of lipid transfer by spartin and its cargos are unknown. May be implicated in endosomal trafficking, or microtubule dynamics, or both. Participates in cytokinesis. In Homo sapiens (Human), this protein is Spartin.